Consider the following 474-residue polypeptide: Dol-P-Glc:Glc(2)Man(9)GlcNAc(2)-PP-Dol alpha-1,2-glucosyltransferase (474 aa).

The Cytoplasmic segment spans residues 1-6 (MAQLEG). A helical membrane pass occupies residues 7–27 (YYFSAALSCTFLVSCLLFSAF). Topologically, residues 28-64 (SRALREPYMDEIFHLPQAQRYCEGRFSLSQWDPMITT) are extracellular. The helical transmembrane segment at 65–85 (LPGLYLVSVGVVKPASWILGW) threads the bilayer. Topologically, residues 86 to 97 (SEHVVCSIGMLR) are cytoplasmic. A helical transmembrane segment spans residues 98-118 (FVNLLFSVGNFYLLYLLFRKI). Topologically, residues 119-126 (QPRNKASS) are extracellular. A helical membrane pass occupies residues 127 to 147 (SIQRILSTLTLAVFPTLYFFN). At 148–150 (FLY) the chain is on the cytoplasmic side. The helical transmembrane segment at 151 to 171 (YTEAGSVFFTLFAYLMCLYGN) threads the bilayer. Residues 172-175 (HRTS) lie on the Extracellular side of the membrane. Residues 176–196 (ALLGFCGFMFRQTNIIWAAFC) traverse the membrane as a helical segment. Residues 197–256 (AGHIIAQKCSEAWKTELQKKKEERLPPAKGPLSELRRVLQFLLMYSMSLKNLSMLFLLTW) lie on the Cytoplasmic side of the membrane. The helical transmembrane segment at 257–277 (PYMLLLLAFFVFVVVNGGIVV) threads the bilayer. Residues 278–283 (GDRSSH) are Extracellular-facing. Residues 284–304 (EACLHFPQLFYFFSFTAFFSF) form a helical membrane-spanning segment. The Cytoplasmic portion of the chain corresponds to 305 to 317 (PHLLSPTKVKTFL). A helical transmembrane segment spans residues 318-338 (SLVWKRRVQFSVITLVSVFLV). Over 339–365 (WKFTYVHKYLLADNRHYTFYVWKRVFQ) the chain is Extracellular. The helical transmembrane segment at 366–386 (RHEIVKYLLVPAYMFAGWAVA) threads the bilayer. Topologically, residues 387-392 (DSLKSK) are cytoplasmic. Residues 393-413 (SIFWNLMFFVCLVASTVPQKL) traverse the membrane as a helical segment. Residues 414–436 (LEFRYFILPYIIYRLNMPLPPIS) are Extracellular-facing. The helical transmembrane segment at 437-457 (RLVCELGCYAVVNFLTFYIFL) threads the bilayer. The Cytoplasmic portion of the chain corresponds to 458–473 (NKTFQWSDSHDIQRFM).

Belongs to the ALG10 glucosyltransferase family. As to quaternary structure, interacts with KCNH1; may regulate KCNH1, possibly by regulating its N-glycosylation. Interacts with KCNH2; may reduce KCNH2 sensitivity to classic proarrhythmic drug blockade, possibly by regulating its N-glycosylation. In terms of tissue distribution, highly expressed in brain, skeletal muscle, uterus, small intestine and liver. Moderately expressed in lung and kidney. Weakly expressed in heart and stomach.

It localises to the endoplasmic reticulum membrane. It carries out the reaction an alpha-D-Glc-(1-&gt;3)-alpha-D-Glc-(1-&gt;3)-alpha-D-Man-(1-&gt;2)-alpha-D-Man-(1-&gt;2)-alpha-D-Man-(1-&gt;3)-[alpha-D-Man-(1-&gt;2)-alpha-D-Man-(1-&gt;3)-[alpha-D-Man-(1-&gt;2)-alpha-D-Man-(1-&gt;6)]-alpha-D-Man-(1-&gt;6)]-beta-D-Man-(1-&gt;4)-beta-D-GlcNAc-(1-&gt;4)-alpha-D-GlcNAc-diphospho-di-trans,poly-cis-dolichol + a di-trans,poly-cis-dolichyl beta-D-glucosyl phosphate = a alpha-D-Glc-(1-&gt;2)-alpha-D-Glc-(1-&gt;3)-alpha-D-Glc-(1-&gt;3)-alpha-D-Man-(1-&gt;2)-alpha-D-Man-(1-&gt;2)-alpha-D-Man-(1-&gt;3)-[alpha-D-Man-(1-&gt;2)-alpha-D-Man-(1-&gt;3)-[alpha-D-Man-(1-&gt;2)-alpha-D-Man-(1-&gt;6)]-alpha-D-Man-(1-&gt;6)]-beta-D-Man-(1-&gt;4)-beta-D-GlcNAc-(1-&gt;4)-alpha-D-GlcNAc-diphospho-di-trans,poly-cis-dolichol + a di-trans,poly-cis-dolichyl phosphate + H(+). Its pathway is protein modification; protein glycosylation. In terms of biological role, dol-P-Glc:Glc(2)Man(9)GlcNAc(2)-PP-Dol alpha-1,2-glucosyltransferase that operates in the biosynthetic pathway of dolichol-linked oligosaccharides, the glycan precursors employed in protein asparagine (N)-glycosylation. The assembly of dolichol-linked oligosaccharides begins on the cytosolic side of the endoplasmic reticulum membrane and finishes in its lumen. The sequential addition of sugars to dolichol pyrophosphate produces dolichol-linked oligosaccharides containing fourteen sugars, including two GlcNAcs, nine mannoses and three glucoses. Once assembled, the oligosaccharide is transferred from the lipid to nascent proteins by oligosaccharyltransferases. In the lumen of the endoplasmic reticulum, adds the third and last glucose residue from dolichyl phosphate glucose (Dol-P-Glc) onto the lipid-linked oligosaccharide intermediate Glc(2)Man(9)GlcNAc(2)-PP-Dol to produce Glc(3)Man(9)GlcNAc(2)-PP-Dol. The sequence is that of Dol-P-Glc:Glc(2)Man(9)GlcNAc(2)-PP-Dol alpha-1,2-glucosyltransferase from Rattus norvegicus (Rat).